A 164-amino-acid polypeptide reads, in one-letter code: Ribosome-binding factor A (164 aa).

This sequence belongs to the RbfA family. In terms of assembly, monomer. Binds 30S ribosomal subunits, but not 50S ribosomal subunits or 70S ribosomes.

The protein resides in the cytoplasm. In terms of biological role, one of several proteins that assist in the late maturation steps of the functional core of the 30S ribosomal subunit. Associates with free 30S ribosomal subunits (but not with 30S subunits that are part of 70S ribosomes or polysomes). Required for efficient processing of 16S rRNA. May interact with the 5'-terminal helix region of 16S rRNA. In Caulobacter sp. (strain K31), this protein is Ribosome-binding factor A.